Reading from the N-terminus, the 252-residue chain is tRNA (guanine-N(1)-)-methyltransferase (252 aa).

S-adenosyl-L-methionine-binding positions include glycine 113 and 133–138 (LGDYVL).

This sequence belongs to the RNA methyltransferase TrmD family. In terms of assembly, homodimer.

It localises to the cytoplasm. The catalysed reaction is guanosine(37) in tRNA + S-adenosyl-L-methionine = N(1)-methylguanosine(37) in tRNA + S-adenosyl-L-homocysteine + H(+). Its function is as follows. Specifically methylates guanosine-37 in various tRNAs. This chain is tRNA (guanine-N(1)-)-methyltransferase, found in Stenotrophomonas maltophilia (strain K279a).